Reading from the N-terminus, the 184-residue chain is Phosducin-like protein 3 (184 aa).

The tract at residues 45–184 is thioredoxin fold; that stretch reads HGELKEIDEQ…VKNNKFKEDD (140 aa).

The protein belongs to the phosducin family.

The chain is Phosducin-like protein 3 (phlp3) from Dictyostelium discoideum (Social amoeba).